The chain runs to 437 residues: Enolase-related protein 1 (437 aa).

Positions 160 and 169 each coordinate substrate. Glu212 acts as the Proton donor in catalysis. Positions 247, 296, and 321 each coordinate Mg(2+). Residues Glu296 and Asp321 each contribute to the substrate site. Catalysis depends on Lys346, which acts as the Proton acceptor. Substrate is bound by residues 373–376 (SHRS) and Lys397.

This sequence belongs to the enolase family. Mg(2+) is required as a cofactor.

The catalysed reaction is (2R)-2-phosphoglycerate = phosphoenolpyruvate + H2O. The protein operates within carbohydrate degradation; glycolysis; pyruvate from D-glyceraldehyde 3-phosphate: step 4/5. In Saccharomyces cerevisiae (strain ATCC 204508 / S288c) (Baker's yeast), this protein is Enolase-related protein 1 (ERR1).